A 921-amino-acid polypeptide reads, in one-letter code: Isoleucine--tRNA ligase (921 aa).

The 'HIGH' region signature appears at 57–67 (PYANGDIHMGH). Residue glutamate 553 coordinates L-isoleucyl-5'-AMP. Positions 594-598 (KMSKS) match the 'KMSKS' region motif. Lysine 597 is an ATP binding site.

It belongs to the class-I aminoacyl-tRNA synthetase family. IleS type 1 subfamily. Monomer.

The protein resides in the cytoplasm. The catalysed reaction is tRNA(Ile) + L-isoleucine + ATP = L-isoleucyl-tRNA(Ile) + AMP + diphosphate. Catalyzes the attachment of isoleucine to tRNA(Ile). As IleRS can inadvertently accommodate and process structurally similar amino acids such as valine, to avoid such errors it has two additional distinct tRNA(Ile)-dependent editing activities. One activity is designated as 'pretransfer' editing and involves the hydrolysis of activated Val-AMP. The other activity is designated 'posttransfer' editing and involves deacylation of mischarged Val-tRNA(Ile). This Bacillus subtilis (strain 168) protein is Isoleucine--tRNA ligase.